The following is a 146-amino-acid chain: Snaclec anticoagulant protein subunit B (146 aa).

Residues 1–23 (MGRFIFVSFGLLVLFLSLSGTAA) form the signal peptide. Residues 24 to 146 (DCPSDWSSYE…IANFVCEFQA (123 aa)) enclose the C-type lectin domain. 3 disulfides stabilise this stretch: Cys25–Cys36, Cys53–Cys142, and Cys119–Cys134. Positions 64, 66, and 70 each coordinate Ca(2+). Residue Glu143 coordinates Ca(2+).

The protein belongs to the snaclec family. Heterodimer with subunit A of agkisacutacin or AaACP; disulfide-linked. In terms of tissue distribution, expressed by the venom gland.

Its subcellular location is the secreted. Functionally, anticoagulant protein which binds to the gamma-carboxyglutamic acid-domain regions of factors IX and factor X in the presence of calcium with a 1 to 1 stoichiometry. Also inhibits platelet aggregation by binding to platelet glycoprotein Ibalpha (GP1BA) and functioning as a blocker of vWF. Is devoid of hemorrhagic and lethal activities. Possesses antithrombotic and thrombolytic activities. Also hydrolyzes the Aalpha-chain of fibrinogen. Does not affect the Bbeta-chain and the gamma chain. The polypeptide is Snaclec anticoagulant protein subunit B (Deinagkistrodon acutus (Hundred-pace snake)).